Here is a 361-residue protein sequence, read N- to C-terminus: Peptide chain release factor 1 (361 aa).

The residue at position 236 (Gln236) is an N5-methylglutamine. Positions 285–309 (TAKDSARAADRKAQVGSGDRSERIR) are enriched in basic and acidic residues. Residues 285–311 (TAKDSARAADRKAQVGSGDRSERIRTY) form a disordered region.

It belongs to the prokaryotic/mitochondrial release factor family. In terms of processing, methylated by PrmC. Methylation increases the termination efficiency of RF1.

Its subcellular location is the cytoplasm. Its function is as follows. Peptide chain release factor 1 directs the termination of translation in response to the peptide chain termination codons UAG and UAA. This is Peptide chain release factor 1 from Methylorubrum extorquens (strain CM4 / NCIMB 13688) (Methylobacterium extorquens).